We begin with the raw amino-acid sequence, 612 residues long: UvrABC system protein C (612 aa).

Residues 21–99 (HQPGVYRMYD…IKKYRPRYNV (79 aa)) form the GIY-YIG domain. Positions 208-243 (QQVIDELMNKMEQASTDLDFERAARFRDQIAALRKT) constitute a UVR domain.

The protein belongs to the UvrC family. Interacts with UvrB in an incision complex.

The protein resides in the cytoplasm. In terms of biological role, the UvrABC repair system catalyzes the recognition and processing of DNA lesions. UvrC both incises the 5' and 3' sides of the lesion. The N-terminal half is responsible for the 3' incision and the C-terminal half is responsible for the 5' incision. In Idiomarina loihiensis (strain ATCC BAA-735 / DSM 15497 / L2-TR), this protein is UvrABC system protein C.